Here is a 2082-residue protein sequence, read N- to C-terminus: Polyketide synthase ThaQ (2082 aa).

Residues 398 to 468 form a disordered region; the sequence is NDARRAGSAR…DSAHDSAHAA (71 aa). Composition is skewed to basic and acidic residues over residues 399–411, 419–430, and 439–468; these read DARRAGSARRDAR, HGARHEAAHDAQ, and ADAHDSAHDSAHDSAHDSAHDSAHDSAHAA. Residues 470-546 enclose the Carrier 1 domain; it reads ALRREGRAYL…ALLDHLLAAH (77 aa). Ser507 carries the post-translational modification O-(pantetheine 4'-phosphoryl)serine. Low complexity-rich tracts occupy residues 560–582 and 593–605; these read APARGVGARAQAAQASGEGRAAP and DTPSSAPSSAPAR. Residues 560-655 form a disordered region; sequence APARGVGARA…RYAPRAPHPD (96 aa). Over residues 606 to 631 the composition is skewed to pro residues; sequence PDQPAPSGPPAQPAQPAPRADTPPPA. One can recognise a Ketosynthase family 3 (KS3) domain in the interval 658–1077; it reads AEPVAIIGIS…GVNAHVVLEE (420 aa). Disordered regions lie at residues 1250–1269 and 1603–1653; these read APGTRHASAGEATEAAEAAE and ARGP…VKSD. Low complexity-rich tracts occupy residues 1256 to 1269 and 1612 to 1624; these read ASAGEATEAAEAAE and SPDAQPPAARAQA. The segment covering 1640–1653 has biased composition (basic and acidic residues); the sequence is ADSKAGPKSEVKSD. Residues 1669–1743 enclose the Carrier 2 domain; it reads ASVAASVEDA…ALVRAVAEAV (75 aa). Residue Ser1703 is modified to O-(pantetheine 4'-phosphoryl)serine. An AB hydrolase-1 domain is found at 1792 to 2022; the sequence is PRVVLIPGLG…GAGHAVFLTH (231 aa). The span at 2045–2067 shows a compositional bias: low complexity; sequence GAAESVESVEATEAAEAARSPAV. A disordered region spans residues 2045 to 2082; that stretch reads GAAESVESVEATEAAEAARSPAVARRRATDDAPVGSDA.

Pantetheine 4'-phosphate serves as cofactor.

It is found in the cytoplasm. The protein operates within antibiotic biosynthesis. In terms of biological role, involved in production of the polyketide antibiotic thailandamide. The sequence is that of Polyketide synthase ThaQ from Burkholderia thailandensis (strain ATCC 700388 / DSM 13276 / CCUG 48851 / CIP 106301 / E264).